Reading from the N-terminus, the 451-residue chain is Phosphoglucosamine mutase (451 aa).

Ser101 serves as the catalytic Phosphoserine intermediate. Mg(2+) contacts are provided by Ser101, Asp242, Asp244, and Asp246. At Ser101 the chain carries Phosphoserine.

This sequence belongs to the phosphohexose mutase family. It depends on Mg(2+) as a cofactor. Activated by phosphorylation.

The catalysed reaction is alpha-D-glucosamine 1-phosphate = D-glucosamine 6-phosphate. Its function is as follows. Catalyzes the conversion of glucosamine-6-phosphate to glucosamine-1-phosphate. This Beijerinckia indica subsp. indica (strain ATCC 9039 / DSM 1715 / NCIMB 8712) protein is Phosphoglucosamine mutase.